A 454-amino-acid polypeptide reads, in one-letter code: MTLEKNKDSFTNIIDLSLINKEQKVTFTPTKEIYTELLKKRLLTIALLVFIIKIGMAIPLPYIDQTKLLNNATSMFDLSGPGLAAVSARASQKIGLFTLGITPSINASIILQLAFVINPNLKKLQREEGESGRRKLIKYTRYLTLLLAITQSVFLIFSLRAFIFEWSILKLFELSCVLSSGAMIILWISECITKTGITNGSSFLIFLNIVSVLPEQIGMSFKNLDIFSFEGLIVILTFSITVWAAIFLQQTLYIIPLKNPKLGQNELTKKLVEDSLYLPFRLNQAGVMPVVFASYLIPILKTGGIYILLKINSFNLFPFLIKFPEVVNQSLESIVEAGLICLFALFYSGLIIDPKDVADELQKSGFFIFAIRPGEKTRNYLEKIFKELSLIGALILAFNVVLLNLVGFVFNLSIFKGFSIGSQIILLGVVTEILQKVQALVLNDVYKRIRDRNK.

Transmembrane regions (helical) follow at residues 43–63, 97–117, 144–164, 168–188, 201–221, 226–246, 289–309, 334–354, 390–410, and 414–434; these read LTIALLVFIIKIGMAIPLPYI, FTLGITPSINASIILQLAFVI, TLLLAITQSVFLIFSLRAFIF, ILKLFELSCVLSSGAMIILWI, SSFLIFLNIVSVLPEQIGMSF, IFSFEGLIVILTFSITVWAAI, PVVFASYLIPILKTGGIYILL, IVEAGLICLFALFYSGLIIDP, LIGALILAFNVVLLNLVGFVF, and IFKGFSIGSQIILLGVVTEIL.

It belongs to the SecY/SEC61-alpha family. As to quaternary structure, component of the plastid Sec protein translocase complex, which is composed of at least SecY and SecE.

Its subcellular location is the plastid. The protein localises to the chloroplast thylakoid membrane. Its function is as follows. The central subunit of the protein translocation channel SecYE. Consists of two halves formed by TMs 1-5 and 6-10. These two domains form a lateral gate at the front which open onto the bilayer between TMs 2 and 7, and are clamped together by SecE at the back. The channel is closed by both a pore ring composed of hydrophobic SecY resides and a short helix (helix 2A) on the extracellular side of the membrane which forms a plug. The sequence is that of Protein translocase subunit SecY from Heterosigma akashiwo (strain NIES-293 / 8280G21-1).